A 674-amino-acid chain; its full sequence is DNA ligase (674 aa).

Residues 34–38 (DADFD), 82–83 (SL), and E107 contribute to the NAD(+) site. The active-site N6-AMP-lysine intermediate is the K109. Residues R130, E170, K286, and K310 each contribute to the NAD(+) site. 4 residues coordinate Zn(2+): C404, C407, C423, and C429. One can recognise a BRCT domain in the interval 593-674 (KPAQTLEGIT…FTRLLETGEA (82 aa)).

It belongs to the NAD-dependent DNA ligase family. LigA subfamily. Mg(2+) is required as a cofactor. The cofactor is Mn(2+).

The catalysed reaction is NAD(+) + (deoxyribonucleotide)n-3'-hydroxyl + 5'-phospho-(deoxyribonucleotide)m = (deoxyribonucleotide)n+m + AMP + beta-nicotinamide D-nucleotide.. Its function is as follows. DNA ligase that catalyzes the formation of phosphodiester linkages between 5'-phosphoryl and 3'-hydroxyl groups in double-stranded DNA using NAD as a coenzyme and as the energy source for the reaction. It is essential for DNA replication and repair of damaged DNA. The polypeptide is DNA ligase (Corynebacterium aurimucosum (strain ATCC 700975 / DSM 44827 / CIP 107346 / CN-1) (Corynebacterium nigricans)).